The following is a 289-amino-acid chain: 4-diphosphocytidyl-2-C-methyl-D-erythritol kinase (289 aa).

Lys-10 is an active-site residue. 95-105 (PVSAGMGGGSA) is a binding site for ATP. Asp-137 is a catalytic residue.

It belongs to the GHMP kinase family. IspE subfamily.

The catalysed reaction is 4-CDP-2-C-methyl-D-erythritol + ATP = 4-CDP-2-C-methyl-D-erythritol 2-phosphate + ADP + H(+). It functions in the pathway isoprenoid biosynthesis; isopentenyl diphosphate biosynthesis via DXP pathway; isopentenyl diphosphate from 1-deoxy-D-xylulose 5-phosphate: step 3/6. Functionally, catalyzes the phosphorylation of the position 2 hydroxy group of 4-diphosphocytidyl-2C-methyl-D-erythritol. This chain is 4-diphosphocytidyl-2-C-methyl-D-erythritol kinase, found in Ligilactobacillus salivarius (strain UCC118) (Lactobacillus salivarius).